A 1264-amino-acid polypeptide reads, in one-letter code: Phosphatidylinositol 3,4,5-trisphosphate 5-phosphatase 2 (1264 aa).

An SH2 domain is found at 26 to 122 (WYHRDLSRAA…GLVCALLLPV (97 aa)). The span at 124–137 (REREPDPPDDRDVS) shows a compositional bias: basic and acidic residues. The disordered stretch occupies residues 124–182 (REREPDPPDDRDVSDGEDEKPPLPPRSGSTSISAPVGPGSPPAAPETPTTPAAESAPNG). A Phosphoserine modification is found at S137. Residues 169–180 (ETPTTPAAESAP) are compositionally biased toward low complexity. Position 170 is a phosphothreonine (T170). A phosphoserine mark is found at S246 and S358. Y892 carries the post-translational modification Phosphotyrosine. At S896 the chain carries Phosphoserine. Positions 903–1123 (GAKSKAPSVS…TFLGEVASGD (221 aa)) are disordered. Over residues 944 to 954 (PPPTGRPPAPP) the composition is skewed to pro residues. An SH3-binding motif is present at residues 950–955 (PPAPPR). Positions 957 to 971 (ASREEPLTPRLKAEG) are enriched in basic and acidic residues. T964 carries the phosphothreonine modification. Residues 989 to 992 (NPAY) carry the NPXY motif motif. Y992 is subject to Phosphotyrosine. Composition is skewed to pro residues over residues 1002 to 1017 (LLPP…PVPP), 1054 to 1065 (LPPPDFPPPPLP), and 1093 to 1110 (GPPP…PGPS). Position 1137 is a phosphoserine (S1137). The interval 1140 to 1178 (DYAPAGPGRSVLLPGPLELQPPRGLPSDYGRPLSFPPPR) is disordered. Y1141 and Y1168 each carry phosphotyrosine. Residues 1210-1264 (WLRAIGLERYEEGLVHNGWDDLEFLSDITEEDLEEAGVQDPAHKRLLLDTLQLSK) enclose the SAM domain. S1263 carries the phosphoserine modification.

It belongs to the inositol 1,4,5-trisphosphate 5-phosphatase family. As to quaternary structure, interacts with tyrosine phosphorylated form of SHC1. Interacts with EGFR. Upon stimulation by the EGF signaling pathway, it forms a complex with SHC1 and EGFR. Interacts with cytoskeletal protein SORBS3/vinexin, promoting its localization to the periphery of cells. Forms a complex with filamin (FLNA or FLNB), actin, GPIb (GP1BA or GP1BB) that regulates cortical and submembraneous actin. Interacts with c-Met/MET, when c-Met/MET is phosphorylated on 'Tyr-1356'. Interacts with p130Cas/BCAR1. Interacts with CENTD3/ARAP3 via its SAM domain. Interacts with c-Cbl/CBL and CAP/SORBS1. Interacts with activated EPHA2 receptor. Interacts with receptor FCGR2A. Interacts with receptor FCGR2B. Interacts with tyrosine kinase ABL1. Interacts with tyrosine kinase TEC. Interacts with CSF1R. Interacts (via N-terminus) with SH3YL1 (via SH3 domain). Interacts with FCRL6 (tyrosine phosphorylated form). Interacts (via SH2 domain) with tyrosine phosphorylated KLRC1 (via ITIM). Interacts with NEDD9/HEF1. Tyrosine phosphorylated by the members of the SRC family after exposure to a diverse array of extracellular stimuli such as insulin, growth factors such as EGF or PDGF, chemokines, integrin ligands and hypertonic and oxidative stress. May be phosphorylated upon IgG receptor FCGR2B-binding. Phosphorylated at Tyr-992 following cell attachment and spreading. Phosphorylated at Tyr-1168 following EGF signaling pathway stimulation. Phosphorylated at Thr-964 in response to PDGF.

The protein resides in the cytoplasm. Its subcellular location is the cytosol. The protein localises to the membrane. It is found in the cell projection. It localises to the filopodium. The protein resides in the lamellipodium. Its subcellular location is the basal cell membrane. The protein localises to the nucleus. It is found in the nucleus speckle. It localises to the cytoskeleton. The protein resides in the spindle pole. The enzyme catalyses a 1,2-diacyl-sn-glycero-3-phospho-(1D-myo-inositol-3,4,5-trisphosphate) + H2O = a 1,2-diacyl-sn-glycero-3-phospho-(1D-myo-inositol-3,4-bisphosphate) + phosphate. The catalysed reaction is 1,2-dioctanoyl-sn-glycero-3-phospho-(1D-myo-inositol-3,4,5-trisphosphate) + H2O = 1,2-dioctanoyl-sn-glycero-3-phospho-(1D-myo-inositol-3,4-bisphosphate) + phosphate. It catalyses the reaction 1,2-dihexadecanoyl-sn-glycero-3-phospho-(1D-myo-inositol-3,4,5-trisphosphate) + H2O = 1,2-dihexadecanoyl-sn-glycero-3-phospho-(1D-myo-inositol-3,4-bisphosphate) + phosphate. Activated upon translocation to the sites of synthesis of PtdIns(3,4,5)P3 in the membrane. Enzymatic activity is enhanced in the presence of phosphatidylserine. Its function is as follows. Phosphatidylinositol (PtdIns) phosphatase that specifically hydrolyzes the 5-phosphate of phosphatidylinositol-3,4,5-trisphosphate (PtdIns(3,4,5)P3) to produce PtdIns(3,4)P2, thereby negatively regulating the PI3K (phosphoinositide 3-kinase) pathways. Required for correct mitotic spindle orientation and therefore progression of mitosis. Plays a central role in regulation of PI3K-dependent insulin signaling, although the precise molecular mechanisms and signaling pathways remain unclear. While overexpression reduces both insulin-stimulated MAP kinase and Akt activation, its absence does not affect insulin signaling or GLUT4 trafficking. Confers resistance to dietary obesity. May act by regulating AKT2, but not AKT1, phosphorylation at the plasma membrane. Part of a signaling pathway that regulates actin cytoskeleton remodeling. Required for the maintenance and dynamic remodeling of actin structures as well as in endocytosis, having a major impact on ligand-induced EGFR internalization and degradation. Participates in regulation of cortical and submembraneous actin by hydrolyzing PtdIns(3,4,5)P3 thereby regulating membrane ruffling. Regulates cell adhesion and cell spreading. Required for HGF-mediated lamellipodium formation, cell scattering and spreading. Acts as a negative regulator of EPHA2 receptor endocytosis by inhibiting via PI3K-dependent Rac1 activation. Acts as a regulator of neuritogenesis by regulating PtdIns(3,4,5)P3 level and is required to form an initial protrusive pattern, and later, maintain proper neurite outgrowth. Acts as a negative regulator of the FC-gamma-RIIA receptor (FCGR2A). Mediates signaling from the FC-gamma-RIIB receptor (FCGR2B), playing a central role in terminating signal transduction from activating immune/hematopoietic cell receptor systems. Involved in EGF signaling pathway. Upon stimulation by EGF, it is recruited by EGFR and dephosphorylates PtdIns(3,4,5)P3. Plays a negative role in regulating the PI3K-PKB pathway, possibly by inhibiting PKB activity. Down-regulates Fc-gamma-R-mediated phagocytosis in macrophages independently of INPP5D/SHIP1. In macrophages, down-regulates NF-kappa-B-dependent gene transcription by regulating macrophage colony-stimulating factor (M-CSF)-induced signaling. Plays a role in the localization of AURKA and NEDD9/HEF1 to the basolateral membrane at interphase in polarized cysts, thereby mediates cell cycle homeostasis, cell polarization and cilia assembly. Additionally promotion of cilia growth is also facilitated by hydrolysis of (PtdIns(3,4,5)P3) to PtdIns(3,4)P2. Promotes formation of apical membrane-initiation sites during the initial stages of lumen formation via Rho family-induced actin filament organization and CTNNB1 localization to cell-cell contacts. May also hydrolyze PtdIns(1,3,4,5)P4, and could thus affect the levels of the higher inositol polyphosphates like InsP6. Involved in endochondral ossification. This Canis lupus familiaris (Dog) protein is Phosphatidylinositol 3,4,5-trisphosphate 5-phosphatase 2.